The chain runs to 1633 residues: D-lysergyl-peptide-synthetase subunit 3 (1633 aa).

The interval 80–483 is adenylation (A) domain; the sequence is FRQRCDLHPD…GRKDSQIKIR (404 aa). The Carrier domain occupies 622–691; that stretch reads EEHRLQRMYS…RLKDLARKAS (70 aa). At Ser-654 the chain carries O-(pantetheine 4'-phosphoryl)serine. Residues 836-1127 form a condensation (C) domain region; it reads PLVRMKLVEG…ILGQIHGKEA (292 aa). A reductase (R) domain region spans residues 1256–1483; it reads VTGASGFIGT…EYNSSAGSEW (228 aa).

Belongs to the NRP synthetase family.

The protein operates within alkaloid biosynthesis; ergot alkaloid biosynthesis. In terms of biological role, D-lysergyl-peptide-synthetase subunit 3; part of the gene cluster that mediates the biosynthesis of fungal ergot alkaloid. DmaW catalyzes the first step of ergot alkaloid biosynthesis by condensing dimethylallyl diphosphate (DMAP) and tryptophan to form 4-dimethylallyl-L-tryptophan. The second step is catalyzed by the methyltransferase easF that methylates 4-dimethylallyl-L-tryptophan in the presence of S-adenosyl-L-methionine, resulting in the formation of 4-dimethylallyl-L-abrine. The catalase easC and the FAD-dependent oxidoreductase easE then transform 4-dimethylallyl-L-abrine to chanoclavine-I which is further oxidized by easD in the presence of NAD(+), resulting in the formation of chanoclavine-I aldehyde. Agroclavine dehydrogenase easG then mediates the conversion of chanoclavine-I aldehyde to agroclavine via a non-enzymatic adduct reaction: the substrate is an iminium intermediate that is formed spontaneously from chanoclavine-I aldehyde in the presence of glutathione. The presence of easA is not required to complete this reaction. Further conversion of agroclavine to paspalic acid is a two-step process involving oxidation of agroclavine to elymoclavine and of elymoclavine to paspalic acid, the second step being performed by the elymoclavine oxidase cloA. Paspalic acid is then further converted to D-lysergic acid. Ergopeptines are assembled from D-lysergic acid and three different amino acids by the D-lysergyl-peptide-synthetases composed each of a monomudular and a trimodular nonribosomal peptide synthetase subunit. LpsB and lpsC encode the monomodular subunits responsible for D-lysergic acid activation and incorporation into the ergopeptine backbone. LpsA1 and A2 subunits encode the trimodular nonribosomal peptide synthetase assembling the tripeptide portion of ergopeptines. LpsA1 is responsible for formation of the major ergopeptine, ergotamine, and lpsA2 for alpha-ergocryptine, the minor ergopeptine of the total alkaloid mixture elaborated by C.purpurea. D-lysergyl-tripeptides are assembled by the nonribosomal peptide synthetases and released as N-(D-lysergyl-aminoacyl)-lactams. Cyclolization of the D-lysergyl-tripeptides is performed by the Fe(2+)/2-ketoglutarate-dependent dioxygenase easH which introduces a hydroxyl group into N-(D-lysergyl-aminoacyl)-lactam at alpha-C of the aminoacyl residue followed by spontaneous condensation with the terminal lactam carbonyl group. The chain is D-lysergyl-peptide-synthetase subunit 3 from Claviceps purpurea (Ergot fungus).